The following is a 906-amino-acid chain: Catenin alpha-1 (906 aa).

N-acetylthreonine is present on Thr2. Residues 2–228 (TAVHAGNINF…PILYTASQAC (227 aa)) are involved in homodimerization. Residue Lys57 forms a Glycyl lysine isopeptide (Lys-Gly) (interchain with G-Cter in SUMO2) linkage. Positions 97–148 (VRKQGDLMKSAAGEFADDPCSSVKRGNMVRAARALLSAVTRLLILADMADVY) are interaction with JUP and CTNNB1. Ser264, Ser295, and Ser297 each carry phosphoserine. Residues 325–394 (TRDDRRERIV…AVMDHVSDSF (70 aa)) form an interaction with alpha-actinin region. Thr634 is modified (phosphothreonine). Ser641 carries the post-translational modification Phosphoserine. At Thr645 the chain carries Phosphothreonine. 2 positions are modified to phosphoserine: Ser652 and Ser655. Phosphothreonine is present on Thr658. Lys797 is covalently cross-linked (Glycyl lysine isopeptide (Lys-Gly) (interchain with G-Cter in SUMO2)). Ser851 carries the post-translational modification Phosphoserine. Basic and acidic residues predominate over residues 864 to 880 (PEKKPLVKREKQDETQT). A disordered region spans residues 864–894 (PEKKPLVKREKQDETQTKIKRASQKKHVNPV). Positions 881–891 (KIKRASQKKHV) are enriched in basic residues.

Belongs to the vinculin/alpha-catenin family. As to quaternary structure, monomer and homodimer; the monomer preferentially binds to CTNNB1 and the homodimer to actin. Component of an cadherin:catenin adhesion complex composed of at least of CDH26, beta-catenin/CTNNB1, alpha-catenin/CTNNA1 and p120 catenin/CTNND1. Possible component of an E-cadherin/ catenin adhesion complex together with E-cadherin/CDH1 and beta-catenin/CTNNB1 or gamma-catenin/JUP; the complex is located to adherens junctions. The stable association of CTNNA1 is controversial as CTNNA1 was shown not to bind to F-actin when assembled in the complex. Alternatively, the CTNNA1-containing complex may be linked to F-actin by other proteins such as LIMA1. Binds AFDN and F-actin. Interacts with LIMA1. Interacts with ARHGAP21. Interacts with AJUBA. Interacts with vinculin/VCL. Interacts with TJP2/ZO2 (via N-terminus). Interacts with TJP1/ZO1 (via N-terminus). Sumoylated. Post-translationally, phosphorylation seems to contribute to the strength of cell-cell adhesion rather than to the basic capacity for cell-cell adhesion. Expressed in cerebellum, heart, liver, small intestine, kidney and placenta (at protein level).

The protein resides in the cytoplasm. Its subcellular location is the cytoskeleton. It is found in the cell junction. It localises to the adherens junction. The protein localises to the cell membrane. The protein resides in the nucleus. Functionally, associates with the cytoplasmic domain of a variety of cadherins. The association of catenins to cadherins produces a complex which is linked to the actin filament network, and which seems to be of primary importance for cadherins cell-adhesion properties. Can associate with both E- and N-cadherins. Originally believed to be a stable component of E-cadherin/catenin adhesion complexes and to mediate the linkage of cadherins to the actin cytoskeleton at adherens junctions. In contrast, cortical actin was found to be much more dynamic than E-cadherin/catenin complexes and CTNNA1 was shown not to bind to F-actin when assembled in the complex suggesting a different linkage between actin and adherens junctions components. The homodimeric form may regulate actin filament assembly and inhibit actin branching by competing with the Arp2/3 complex for binding to actin filaments. Involved in the regulation of WWTR1/TAZ, YAP1 and TGFB1-dependent SMAD2 and SMAD3 nuclear accumulation. May play a crucial role in cell differentiation. This is Catenin alpha-1 from Mus musculus (Mouse).